The primary structure comprises 429 residues: Glutamate-1-semialdehyde 2,1-aminomutase 1 (429 aa).

The residue at position 268 (lysine 268) is an N6-(pyridoxal phosphate)lysine.

It belongs to the class-III pyridoxal-phosphate-dependent aminotransferase family. HemL subfamily. In terms of assembly, homodimer. Pyridoxal 5'-phosphate is required as a cofactor.

The protein localises to the cytoplasm. It catalyses the reaction (S)-4-amino-5-oxopentanoate = 5-aminolevulinate. The protein operates within porphyrin-containing compound metabolism; protoporphyrin-IX biosynthesis; 5-aminolevulinate from L-glutamyl-tRNA(Glu): step 2/2. This is Glutamate-1-semialdehyde 2,1-aminomutase 1 from Listeria innocua serovar 6a (strain ATCC BAA-680 / CLIP 11262).